The primary structure comprises 466 residues: Methylenetetrahydrofolate--tRNA-(uracil-5-)-methyltransferase TrmFO (466 aa).

An FAD-binding site is contributed by 14–19; that stretch reads GGGLAG.

This sequence belongs to the MnmG family. TrmFO subfamily. Requires FAD as cofactor.

Its subcellular location is the cytoplasm. It catalyses the reaction uridine(54) in tRNA + (6R)-5,10-methylene-5,6,7,8-tetrahydrofolate + NADH + H(+) = 5-methyluridine(54) in tRNA + (6S)-5,6,7,8-tetrahydrofolate + NAD(+). The enzyme catalyses uridine(54) in tRNA + (6R)-5,10-methylene-5,6,7,8-tetrahydrofolate + NADPH + H(+) = 5-methyluridine(54) in tRNA + (6S)-5,6,7,8-tetrahydrofolate + NADP(+). In terms of biological role, catalyzes the folate-dependent formation of 5-methyl-uridine at position 54 (M-5-U54) in all tRNAs. The protein is Methylenetetrahydrofolate--tRNA-(uracil-5-)-methyltransferase TrmFO of Brucella canis (strain ATCC 23365 / NCTC 10854 / RM-666).